Here is a 102-residue protein sequence, read N- to C-terminus: NADH-quinone oxidoreductase subunit K (102 aa).

The next 3 helical transmembrane spans lie at 6–26 (LGQG…GVLV), 30–50 (LLFM…AFIV), and 64–84 (FILV…LILL).

It belongs to the complex I subunit 4L family. In terms of assembly, NDH-1 is composed of 14 different subunits. Subunits NuoA, H, J, K, L, M, N constitute the membrane sector of the complex.

It is found in the cell inner membrane. It catalyses the reaction a quinone + NADH + 5 H(+)(in) = a quinol + NAD(+) + 4 H(+)(out). In terms of biological role, NDH-1 shuttles electrons from NADH, via FMN and iron-sulfur (Fe-S) centers, to quinones in the respiratory chain. The immediate electron acceptor for the enzyme in this species is believed to be ubiquinone. Couples the redox reaction to proton translocation (for every two electrons transferred, four hydrogen ions are translocated across the cytoplasmic membrane), and thus conserves the redox energy in a proton gradient. This is NADH-quinone oxidoreductase subunit K from Acidiphilium cryptum (strain JF-5).